The following is a 269-amino-acid chain: Regulating synaptic membrane exocytosis protein 4 (269 aa).

A C2 domain is found at 115-233; the sequence is PMGGVEIGLQ…DLTTLAVGWY (119 aa). Phosphoserine is present on residues Ser-254 and Ser-257.

Binds PPFIA3. As to expression, brain specific.

The protein resides in the synapse. Functionally, regulates synaptic membrane exocytosis. The chain is Regulating synaptic membrane exocytosis protein 4 (Rims4) from Rattus norvegicus (Rat).